Here is a 79-residue protein sequence, read N- to C-terminus: MKRLLIMIVRFYQKYISPLKPPTCRFEPTCSNYFIQALEKHGLLKGLFLGLRRVVRCNPLSKGGYDPVPEEFSFKLRRR.

The protein belongs to the UPF0161 family.

It localises to the cell inner membrane. In terms of biological role, could be involved in insertion of integral membrane proteins into the membrane. In Thermotoga neapolitana (strain ATCC 49049 / DSM 4359 / NBRC 107923 / NS-E), this protein is Putative membrane protein insertion efficiency factor.